We begin with the raw amino-acid sequence, 240 residues long: MKRPSGRAADQLRSIRITRNYTKHAEGSVLVEFGDTKVICTVSVENGVPRFLKGQGQGWLTAEYGMLPRATGERNQREASRGKQGGRTLEIQRLIGRSLRAALDMSKLGDVTLYVDCDVIQADGGTRTASITGAMVALADALKVIKKRGGLKGGDPLKQMIAAVSVGMYQGEPVLDLDYLEDSAAETDLNVVMTSAGGFIEVQGTAEGAPFQPEELNAMLALAQKGMTELFEMQRAALAD.

Phosphate-binding positions include R87 and 125–127 (GTR).

This sequence belongs to the RNase PH family. Homohexameric ring arranged as a trimer of dimers.

It catalyses the reaction tRNA(n+1) + phosphate = tRNA(n) + a ribonucleoside 5'-diphosphate. Functionally, phosphorolytic 3'-5' exoribonuclease that plays an important role in tRNA 3'-end maturation. Removes nucleotide residues following the 3'-CCA terminus of tRNAs; can also add nucleotides to the ends of RNA molecules by using nucleoside diphosphates as substrates, but this may not be physiologically important. Probably plays a role in initiation of 16S rRNA degradation (leading to ribosome degradation) during starvation. The chain is Ribonuclease PH from Pseudomonas syringae pv. tomato (strain ATCC BAA-871 / DC3000).